A 708-amino-acid chain; its full sequence is Transcriptional regulator nsrM (708 aa).

The segment at residues 37 to 63 (CVRCQQRKVRCDHKSPCGNCVASDSQC) is a DNA-binding region (zn(2)-C6 fungal-type).

Its subcellular location is the nucleus. Its function is as follows. Transcriptional regulator; part of the gene cluster that mediates the biosynthesis of the tetrahydroxanthone dimer neosartorin, which exhibits antibacterial activity. The polypeptide is Transcriptional regulator nsrM (Aspergillus novofumigatus (strain IBT 16806)).